The following is a 292-amino-acid chain: Aquaporin-3 (292 aa).

The Cytoplasmic portion of the chain corresponds to 1-24 (MGRQKELMNRCGEMLHIRYRLLRQ). Residues 25-42 (ALAECLGTLILVMFGCGS) traverse the membrane as a helical segment. The Extracellular portion of the chain corresponds to 43 to 56 (VAQVVLSRGTHGGF). A helical transmembrane segment spans residues 57–74 (LTINLAFGFAVTLGILVA). Residues 75–78 (GQVS) are Cytoplasmic-facing. The segment at residues 79–92 (GAHLNPAVTFAMCF) is an intramembrane region (discontinuously helical). The NPA 1 signature appears at 83–85 (NPA). Residues 93–100 (LAREPWIK) lie on the Cytoplasmic side of the membrane. Residues 101-121 (LPIYALAQTLGAFLGAGIVFG) traverse the membrane as a helical segment. The Extracellular segment spans residues 122-159 (LYYDAIWAFANNELFVSGPNGTAGIFATYPSGHLDMVN). An N-linked (GlcNAc...) asparagine glycan is attached at asparagine 141. The helical transmembrane segment at 160 to 177 (GFFDQFIGTAALIVCVLA) threads the bilayer. At 178-189 (IVDPYNNPVPRG) the chain is on the cytoplasmic side. Residues 190–206 (LEAFTVGLVVLVIGTSM) form a helical membrane-spanning segment. The Extracellular portion of the chain corresponds to 207–210 (GFNS). The segment at residues 211 to 224 (GYAVNPARDFGPRL) is an intramembrane region (discontinuously helical). Residues 215–217 (NPA) carry the NPA 2 motif. At 225 to 242 (FTALAGWGSEVFTTGRHW) the chain is on the extracellular side. A helical transmembrane segment spans residues 243–264 (WWVPIVSPLLGSIAGVFVYQLM). Residues 265 to 292 (IGCHLEQPPPSTEEENVKLAHMKHKEQI) are Cytoplasmic-facing.

Belongs to the MIP/aquaporin (TC 1.A.8) family. In terms of assembly, homotetramer; each monomer provides an independent glycerol/water pore. Could also exist in other oligomeric states. Detected in principal cells in collecting ducts in kidney medulla (at protein level). Renal medulla and colon. Predominantly in the inner medulla. Expressed in basal layer of epidermal keratinocytes.

The protein localises to the cell membrane. The protein resides in the basolateral cell membrane. The catalysed reaction is glycerol(in) = glycerol(out). It carries out the reaction H2O(in) = H2O(out). The enzyme catalyses urea(in) = urea(out). It catalyses the reaction H2O2(out) = H2O2(in). Functionally, aquaglyceroporins form homotetrameric transmembrane channels, with each monomer independently mediating glycerol and water transport across the plasma membrane along their osmotic gradient. Could also be permeable to urea. Also participates in cell permeability to H2O2 and H2O2-mediated signaling. In skin, transports glycerol to the epidermis and stratum corneum, where it maintains hydration, elasticity, and supports lipid biosynthesis for barrier repair. In kidney, contributes to the reabsorption of water, helping the body maintain proper fluid balance. The sequence is that of Aquaporin-3 from Mus musculus (Mouse).